The following is a 321-amino-acid chain: Ferredoxin--NADP reductase (321 aa).

7 residues coordinate FAD: glutamate 33, glutamine 41, tyrosine 46, valine 86, leucine 119, aspartate 277, and serine 318.

It belongs to the ferredoxin--NADP reductase type 2 family. As to quaternary structure, homodimer. FAD is required as a cofactor.

The catalysed reaction is 2 reduced [2Fe-2S]-[ferredoxin] + NADP(+) + H(+) = 2 oxidized [2Fe-2S]-[ferredoxin] + NADPH. The sequence is that of Ferredoxin--NADP reductase from Lactococcus lactis subsp. cremoris (strain SK11).